The primary structure comprises 238 residues: Purine nucleoside phosphorylase DeoD-type (238 aa).

His-4 is an a purine D-ribonucleoside binding site. Phosphate-binding positions include Gly-20, Arg-24, Arg-43, and 87-90 (RVGT). A purine D-ribonucleoside contacts are provided by residues 179 to 181 (EME) and 203 to 204 (SN).

Belongs to the PNP/UDP phosphorylase family. In terms of assembly, homohexamer; trimer of homodimers.

The catalysed reaction is a purine D-ribonucleoside + phosphate = a purine nucleobase + alpha-D-ribose 1-phosphate. It catalyses the reaction a purine 2'-deoxy-D-ribonucleoside + phosphate = a purine nucleobase + 2-deoxy-alpha-D-ribose 1-phosphate. Its function is as follows. Catalyzes the reversible phosphorolytic breakdown of the N-glycosidic bond in the beta-(deoxy)ribonucleoside molecules, with the formation of the corresponding free purine bases and pentose-1-phosphate. The sequence is that of Purine nucleoside phosphorylase DeoD-type from Lacticaseibacillus casei (strain BL23) (Lactobacillus casei).